A 150-amino-acid chain; its full sequence is Large ribosomal subunit protein uL15 (150 aa).

The disordered stretch occupies residues 1–57 (MTIKLESLQSNKGSRRKKMRKGRGIAAGQGASCGFGMRGQKSRSGRPTRPGFEGGQM). Positions 13–23 (GSRRKKMRKGR) are enriched in basic residues. The span at 25–37 (IAAGQGASCGFGM) shows a compositional bias: gly residues.

Belongs to the universal ribosomal protein uL15 family. In terms of assembly, part of the 50S ribosomal subunit.

Binds to the 23S rRNA. The sequence is that of Large ribosomal subunit protein uL15 from Prochlorococcus marinus (strain NATL1A).